The sequence spans 246 residues: U11/U12 small nuclear ribonucleoprotein 35 kDa protein (246 aa).

The RRM domain occupies 51-129 (LTLFVARLNL…HEIFVDYELE (79 aa)). Residue K172 forms a Glycyl lysine isopeptide (Lys-Gly) (interchain with G-Cter in SUMO2) linkage. The tract at residues 187-217 (SRSRERHWDSRTRDRDHDRGREKRWQEREPT) is disordered. A compositionally biased stretch (basic and acidic residues) spans 192–217 (RHWDSRTRDRDHDRGREKRWQEREPT).

In terms of assembly, component of the U11/U12 snRNPs that are part of the U12-type spliceosome. As to expression, expressed in heart, liver, skeletal muscle and pancreas.

The protein resides in the nucleus. This chain is U11/U12 small nuclear ribonucleoprotein 35 kDa protein (SNRNP35), found in Homo sapiens (Human).